The following is a 399-amino-acid chain: Glucosamine kinase (399 aa).

ATP-binding positions include Lys-98, 149–151 (EYL), and Asp-156. Residue Asp-262 participates in D-glucosamine binding. Mg(2+)-binding residues include Gln-267, Asp-279, and Asp-281. The short motif at 366–381 (QVLREIIYAARHLPRW) is the Substrate specificity determinant motif element. Glu-370 provides a ligand contact to D-glucosamine.

This sequence belongs to the actinobacterial glucosamine kinase family. As to quaternary structure, monomer. It depends on Mg(2+) as a cofactor.

The catalysed reaction is D-glucosamine + ATP = D-glucosamine 6-phosphate + ADP + H(+). Its function is as follows. Catalyzes the ATP-dependent phosphorylation of D-glucosamine (GlcN) to D-glucosamine 6-phosphate. May be involved in the phosphorylation of acquired extracellular GlcN derived from the hydrolysis of chitosan, i.e., in the incorporation of exogenous GlcN into the bacterial GlcNAc metabolism. Is unable to phosphorylate maltose. This is Glucosamine kinase from Mycolicibacterium smegmatis (strain ATCC 700084 / mc(2)155) (Mycobacterium smegmatis).